Reading from the N-terminus, the 178-residue chain is Large ribosomal subunit protein uL10 (178 aa).

Belongs to the universal ribosomal protein uL10 family. As to quaternary structure, part of the ribosomal stalk of the 50S ribosomal subunit. The N-terminus interacts with L11 and the large rRNA to form the base of the stalk. The C-terminus forms an elongated spine to which L12 dimers bind in a sequential fashion forming a multimeric L10(L12)X complex.

Forms part of the ribosomal stalk, playing a central role in the interaction of the ribosome with GTP-bound translation factors. The chain is Large ribosomal subunit protein uL10 from Thermosynechococcus vestitus (strain NIES-2133 / IAM M-273 / BP-1).